Here is a 228-residue protein sequence, read N- to C-terminus: MASTASEIIAFMVSISGWVLVSSTLPTDYWKVSTIDGTVITTATYWANLWKACVTDSTGVSNCKDFPSMLALDGYIQACRGLMIAAVSLGFFGSIFALFGMKCTKVGGSDKAKAKIACLAGIVFILSGLCSMTGCSLYANKITTEFFDPLFVEQKYELGAALFIGWAGASLCIIGGVIFCFSISDNNKTPRYAYNGATSVMSSRTKYHGGEDFKTTNPSKQFDKNAYV.

A helical membrane pass occupies residues 1–21; that stretch reads MASTASEIIAFMVSISGWVLV. The Extracellular segment spans residues 22–80; sequence SSTLPTDYWKVSTIDGTVITTATYWANLWKACVTDSTGVSNCKDFPSMLALDGYIQACR. A helical membrane pass occupies residues 81–101; it reads GLMIAAVSLGFFGSIFALFGM. Residues 102–115 are Cytoplasmic-facing; sequence KCTKVGGSDKAKAK. Residues 116–136 traverse the membrane as a helical segment; that stretch reads IACLAGIVFILSGLCSMTGCS. At 137–160 the chain is on the extracellular side; that stretch reads LYANKITTEFFDPLFVEQKYELGA. A helical transmembrane segment spans residues 161 to 181; the sequence is ALFIGWAGASLCIIGGVIFCF. Topologically, residues 182-228 are cytoplasmic; the sequence is SISDNNKTPRYAYNGATSVMSSRTKYHGGEDFKTTNPSKQFDKNAYV.

This sequence belongs to the claudin family. As to quaternary structure, can form homodimers both in trans (interaction between CLDN10 molecules in opposing membranes) and in cis (interaction between CLDN10 molecules within one membrane). Interacts with CLDN19.

Its subcellular location is the cell junction. The protein localises to the tight junction. It is found in the cell membrane. The enzyme catalyses Na(+)(in) = Na(+)(out). It carries out the reaction Li(+)(in) = Li(+)(out). It catalyses the reaction K(+)(in) = K(+)(out). The catalysed reaction is Rb(+)(in) = Rb(+)(out). The enzyme catalyses Cs(+)(in) = Cs(+)(out). It carries out the reaction NH4(+)(in) = NH4(+)(out). It catalyses the reaction methylamine(out) = methylamine(in). The catalysed reaction is Mg(2+)(in) = Mg(2+)(out). The enzyme catalyses Ca(2+)(in) = Ca(2+)(out). It carries out the reaction Sr(2+)(in) = Sr(2+)(out). It catalyses the reaction chloride(in) = chloride(out). The catalysed reaction is nitrate(in) = nitrate(out). In terms of biological role, forms paracellular channels: polymerizes in tight junction strands with cation- and anion-selective channels through the strands, conveying epithelial permeability in a process known as paracellular tight junction permeability. In sweat glands and in the thick ascending limb (TAL) of Henle's loop in kidney, it controls paracellular sodium permeability which is essential for proper sweat production and renal function. In renal proximal tubules, it conveys selective chloride over hydrogencarbonate anion permeability which is required for renal chloride reabsorption and salt homeostasis. The protein is Claudin-10 (CLDN10) of Pongo abelii (Sumatran orangutan).